The following is a 438-amino-acid chain: Probable tRNA pseudouridine synthase D (438 aa).

The active-site Nucleophile is the aspartate 86. Positions 165–390 (GVPNFFGIQR…SKGTRREVLL (226 aa)) constitute a TRUD domain.

This sequence belongs to the pseudouridine synthase TruD family.

It carries out the reaction uridine(13) in tRNA = pseudouridine(13) in tRNA. In terms of biological role, could be responsible for synthesis of pseudouridine from uracil-13 in transfer RNAs. The chain is Probable tRNA pseudouridine synthase D from Methanosarcina mazei (strain ATCC BAA-159 / DSM 3647 / Goe1 / Go1 / JCM 11833 / OCM 88) (Methanosarcina frisia).